The sequence spans 338 residues: Large ribosomal subunit protein uL10 (338 aa).

Residues Ile-302–Gly-338 form a disordered region. Residues Glu-310–Ala-329 show a composition bias toward acidic residues.

The protein belongs to the universal ribosomal protein uL10 family. Part of the 50S ribosomal subunit. Forms part of the ribosomal stalk which helps the ribosome interact with GTP-bound translation factors. Forms a heptameric L10(L12)2(L12)2(L12)2 complex, where L10 forms an elongated spine to which the L12 dimers bind in a sequential fashion.

In terms of biological role, forms part of the ribosomal stalk, playing a central role in the interaction of the ribosome with GTP-bound translation factors. This chain is Large ribosomal subunit protein uL10, found in Thermococcus sibiricus (strain DSM 12597 / MM 739).